The following is a 729-amino-acid chain: Beta-galactosidase 4 (729 aa).

The signal sequence occupies residues 1–35; that stretch reads MAPAPTPAAAAGRRVAVLAAALVAASLAASVGVAN. The active-site Proton donor is the Glu-194. The active-site Nucleophile is the Glu-263.

The protein belongs to the glycosyl hydrolase 35 family.

The protein localises to the secreted. It localises to the extracellular space. The protein resides in the apoplast. It carries out the reaction Hydrolysis of terminal non-reducing beta-D-galactose residues in beta-D-galactosides.. The sequence is that of Beta-galactosidase 4 from Oryza sativa subsp. japonica (Rice).